A 649-amino-acid chain; its full sequence is Nitrosuccinic acid synthase npaA (649 aa).

It belongs to the nitrosuccinic acid synthase family. It depends on FAD as a cofactor.

It catalyses the reaction L-aspartate + 3 NADPH + 3 O2 + 2 H(+) = 2-nitrobutanedioate + 3 NADP(+) + 4 H2O. It participates in mycotoxin biosynthesis. In terms of biological role, nitrosuccinic acid synthase; part of the gene cluster that mediates the biosynthesis of the deadly neurotoxic nitroalkane 3-nitropropanoic acid (3-NPA) that acts as an antimetabolite of succinate and irreversibly inhibits succinate dehydrogenase and disrupts mitochondrial oxidative phosphorylation. NpaA catalyzes the iterative oxidation of L-aspartic acid to nitrosuccinic acid (2-nitrobutanedioate). Alternative amino acid substrates such as L-glutamate and D-aspartate are not accepted by npaA as a substrate, showing the strict substrate specificity toward L-aspartate. The nitrosuccinic acid decarboxylase npaB then facilitates decarboxylation of Nitrosuccinic acid to produce 3-NPA. The protein is Nitrosuccinic acid synthase npaA of Aspergillus oryzae (strain ATCC 42149 / RIB 40) (Yellow koji mold).